The sequence spans 693 residues: MDYNKLRNIGISAHIDSGKTTLTERILFYCNKIHAIHEVKGKDGVGATMDSMELERERGITIASAATHVEWKDFPINIIDTPGHVDFTIEVERSLRVLDGAILVLDSVAGVQSQSITVDRQLKRYSVPRLAFVNKCDKTGANPYNVKDQLRSKLDLNSVLMQIPIGLEDKHIGVIDLVLMKAYYFEGKDGTEIIEKEIPSELLEEAKNKREMMLDALADFNDELMELHMEGKEVPIEIIYNAIRTGTLALKLCPVFMGSAYKNKGVQLLLDAVTRFLPSPHDIKNTALDLNNNEKEIDLKIDNNLPTVALAFKLEDGQYGQLTYVRIYQGTLKKGQELINSRTSKKFKVGRLIRMHANNTEDIEFGGSGDIVALFGIECASGDTFCDPSINYSMTSMFIPDPVISLSVKPKDKKSADNMAKALGRFTKEDPTFKTYVDIESNETIIQGMGELHLGVYIERMKREFKAEVETGMPQVAYRETITGKAEFNYTHKKQSGGAGQFGRVAGFMEPLNKEGETYEFVNLIKGGVIPTEYIPSCDKGFQKAMEKGTLIGFPIVDIKITINDGQYHIVDSSDIAFQLAAIGAFREAYEKAKPTILEPIMKVTLEGPTEFQGNMFGLLNQRRGIITGSLEDGSFSKVEAEVPLSEMFGFSTVLRSSTQGKAEFSMEFLKYGKVPSAIFDELRKKFNDQNKS.

The tr-type G domain occupies 4–281 (NKLRNIGISA…AVTRFLPSPH (278 aa)). Residues 13–20 (AHIDSGKT), 80–84 (DTPGH), and 134–137 (NKCD) each bind GTP.

The protein belongs to the TRAFAC class translation factor GTPase superfamily. Classic translation factor GTPase family. EF-G/EF-2 subfamily.

It localises to the cytoplasm. Functionally, catalyzes the GTP-dependent ribosomal translocation step during translation elongation. During this step, the ribosome changes from the pre-translocational (PRE) to the post-translocational (POST) state as the newly formed A-site-bound peptidyl-tRNA and P-site-bound deacylated tRNA move to the P and E sites, respectively. Catalyzes the coordinated movement of the two tRNA molecules, the mRNA and conformational changes in the ribosome. This is Elongation factor G 1 from Borreliella afzelii (strain PKo) (Borrelia afzelii).